Consider the following 289-residue polypeptide: Phosphatidylserine decarboxylase proenzyme (289 aa).

Active-site charge relay system; for autoendoproteolytic cleavage activity residues include aspartate 92, histidine 149, and serine 254. The active-site Schiff-base intermediate with substrate; via pyruvic acid; for decarboxylase activity is the serine 254. Serine 254 carries the pyruvic acid (Ser); by autocatalysis modification.

This sequence belongs to the phosphatidylserine decarboxylase family. PSD-B subfamily. Prokaryotic type I sub-subfamily. In terms of assembly, heterodimer of a large membrane-associated beta subunit and a small pyruvoyl-containing alpha subunit. The cofactor is pyruvate. In terms of processing, is synthesized initially as an inactive proenzyme. Formation of the active enzyme involves a self-maturation process in which the active site pyruvoyl group is generated from an internal serine residue via an autocatalytic post-translational modification. Two non-identical subunits are generated from the proenzyme in this reaction, and the pyruvate is formed at the N-terminus of the alpha chain, which is derived from the carboxyl end of the proenzyme. The autoendoproteolytic cleavage occurs by a canonical serine protease mechanism, in which the side chain hydroxyl group of the serine supplies its oxygen atom to form the C-terminus of the beta chain, while the remainder of the serine residue undergoes an oxidative deamination to produce ammonia and the pyruvoyl prosthetic group on the alpha chain. During this reaction, the Ser that is part of the protease active site of the proenzyme becomes the pyruvoyl prosthetic group, which constitutes an essential element of the active site of the mature decarboxylase.

Its subcellular location is the cell membrane. It catalyses the reaction a 1,2-diacyl-sn-glycero-3-phospho-L-serine + H(+) = a 1,2-diacyl-sn-glycero-3-phosphoethanolamine + CO2. The protein operates within phospholipid metabolism; phosphatidylethanolamine biosynthesis; phosphatidylethanolamine from CDP-diacylglycerol: step 2/2. Its function is as follows. Catalyzes the formation of phosphatidylethanolamine (PtdEtn) from phosphatidylserine (PtdSer). This chain is Phosphatidylserine decarboxylase proenzyme, found in Pseudomonas aeruginosa (strain UCBPP-PA14).